Here is a 198-residue protein sequence, read N- to C-terminus: Ribonuclease HII (198 aa).

The RNase H type-2 domain occupies 10–198 (HLVAGVDEVG…PVKRALGLVC (189 aa)). The a divalent metal cation site is built by D16, E17, and D108.

This sequence belongs to the RNase HII family. It depends on Mn(2+) as a cofactor. The cofactor is Mg(2+).

The protein resides in the cytoplasm. The catalysed reaction is Endonucleolytic cleavage to 5'-phosphomonoester.. Its function is as follows. Endonuclease that specifically degrades the RNA of RNA-DNA hybrids. The sequence is that of Ribonuclease HII from Enterobacter sp. (strain 638).